The chain runs to 504 residues: CDK5 regulatory subunit-associated protein 3 (504 aa).

3 short sequence motifs (shuffled ATG8-binding motif) span residues 266–269 (IDWG), 290–293 (IDWG), and 308–311 (IDWG). The segment at 268–504 (WGDFGLEAVS…RPVNLMGTSV (237 aa)) is required for interaction with UFL1 and mediates interaction with CHEK1. The RPL10a-binding domain (RBD) stretch occupies residues 353–368 (DELMELEIFLSQRAVE). Lysine 448 is covalently cross-linked (Glycyl lysine isopeptide (Lys-Gly) (interchain with G-Cter in SUMO2)).

Belongs to the CDK5RAP3 family. Substrate adapter component of the UFM1 ribosome E3 ligase (UREL) complex, composed of UFL1, DDRGK1 and CDK5RAP3. Interaction with UFL1 anchors CDK5RAP3 in the cytoplasm, preventing its translocation to the nucleus which allows expression of the CCND1 cyclin and progression of cells through the G1/S transition. Interacts with ATG8 family proteins MAP1LC3A, MAP1LC3B, GABARAP, GABARAPL1 and GABARAPL2. Interacts with CDK5R1; competes with CDK5RAP1 and CDK5RAP2. Interacts with RELA. Interacts with CHEK1; may negatively regulate CHEK1 and thereby stimulate entry into mitosis. Interacts with CDKN2A/ARF and MDM2; forms a ternary complex involved in regulation of p53/TP53. Interacts with MAPK14. Interacts with CCNB1. Interacts with TUBG1; may regulate CDK5RAP3 in mitotic G2/M transition checkpoint. In terms of processing, may be phosphorylated by CDK5. Ubiquitinated. Probably triggers proteasomal degradation and is negatively regulated by UFL1. Post-translationally, may be ufmylated. In terms of processing, cleaved by caspases early during apoptosis, the resulting peptides may play a role in rupture of the nuclear envelope. As to expression, expressed in vascular endothelium. Up-regulated in failing heart. Highly expressed in the ventricular section in subacute and chronic ischemic heart failure.

The protein resides in the endoplasmic reticulum membrane. It localises to the cytoplasm. Its subcellular location is the nucleus. The protein localises to the cytoskeleton. It is found in the microtubule organizing center. The protein resides in the centrosome. In terms of biological role, substrate adapter of E3 ligase complexes mediating ufmylation, the covalent attachment of the ubiquitin-like modifier UFM1 to substrate proteins, and which is involved in various processes, such as ribosome recycling and reticulophagy (also called ER-phagy). As part of the UREL complex, plays a key role in ribosome recycling by promoting mono-ufmylation of RPL26/uL24 subunit of the 60S ribosome. Ufmylation of RPL26/uL24 occurs on free 60S ribosomes following ribosome dissociation: it weakens the junction between post-termination 60S subunits and SEC61 translocons, promoting release and recycling of the large ribosomal subunit from the endoplasmic reticulum membrane. Ufmylation of RPL26/uL24 and subsequent 60S ribosome recycling either take place after normal termination of translation or after ribosome stalling during cotranslational translocation at the endoplasmic reticulum. Within the UREL complex, CDK5RAP3 acts as a substrate adapter that constrains UFL1 ligase activity to mono-ufmylate RPL26/uL24 at 'Lys-134'. The UREL complex is also involved in reticulophagy in response to endoplasmic reticulum stress by promoting ufmylation of proteins such as CYB5R3, thereby promoting lysosomal degradation of ufmylated proteins. Also acts as a regulator of transcription: negatively regulates NF-kappa-B-mediated gene transcription through the control of RELA phosphorylation. Also regulates mitotic G2/M transition checkpoint and mitotic G2 DNA damage checkpoint. Through its interaction with CDKN2A/ARF and MDM2 may induce MDM2-dependent p53/TP53 ubiquitination, stabilization and activation in the nucleus, thereby promoting G1 cell cycle arrest and inhibition of cell proliferation. May also play a role in the rupture of the nuclear envelope during apoptosis. May regulate MAPK14 activity by regulating its dephosphorylation by PPM1D/WIP1. Required for liver development. The sequence is that of CDK5 regulatory subunit-associated protein 3 from Rattus norvegicus (Rat).